The following is a 228-amino-acid chain: Large ribosomal subunit protein uL3 (228 aa).

Residues 135–159 (MKSQRASHGNSRSHNVPGSIGMAQD) form a disordered region. A compositionally biased stretch (polar residues) spans 140 to 150 (ASHGNSRSHNV). The residue at position 158 (glutamine 158) is an N5-methylglutamine.

It belongs to the universal ribosomal protein uL3 family. In terms of assembly, part of the 50S ribosomal subunit. Forms a cluster with proteins L14 and L19. Post-translationally, methylated by PrmB.

Its function is as follows. One of the primary rRNA binding proteins, it binds directly near the 3'-end of the 23S rRNA, where it nucleates assembly of the 50S subunit. The sequence is that of Large ribosomal subunit protein uL3 from Albidiferax ferrireducens (strain ATCC BAA-621 / DSM 15236 / T118) (Rhodoferax ferrireducens).